A 329-amino-acid chain; its full sequence is Olfactory receptor 52L1 (329 aa).

The Extracellular portion of the chain corresponds to 1–43 (MTLVSFFSFLSKPLIMLLSNSSWRLSQPSFLLVGIPGLEESQH). An N-linked (GlcNAc...) asparagine glycan is attached at asparagine 20. Residues 44 to 64 (WIALPLGILYLLALVGNVTIL) form a helical membrane-spanning segment. Topologically, residues 65–72 (FIIWMDPS) are cytoplasmic. The helical transmembrane segment at 73–93 (LHQSMYLFLSMLAAIDLVLAS) threads the bilayer. Topologically, residues 94–117 (STAPKALAVLLVHAHEIGYIVCLI) are extracellular. The cysteines at positions 115 and 207 are disulfide-linked. The helical transmembrane segment at 118–138 (QMFFIHAFSSMESGVLVAMAL) threads the bilayer. Residues 139–157 (DRYVAICHPLHHSTILHPG) are Cytoplasmic-facing. The chain crosses the membrane as a helical span at residues 158–178 (VIGRIGMVVLVRGLLLLIPFP). Topologically, residues 179 to 214 (ILLGTLIFCQATIIGHAYCEHMAVVKLACSETTVNR) are extracellular. A helical transmembrane segment spans residues 215-235 (AYGLTMALLVIGLDVLAIGVS). The Cytoplasmic portion of the chain corresponds to 236–255 (YAHILQAVLKVPGSEARLKA). The helical transmembrane segment at 256–276 (FSTCGSHICVILVFYVPGIFS) threads the bilayer. Residues 277–291 (FLTHRFGHHVPHHVH) lie on the Extracellular side of the membrane. A helical transmembrane segment spans residues 292–312 (VLLATRYLLMPPALNPLVYGV). Over 313-329 (KTQQIRQRVLRVFTQKD) the chain is Cytoplasmic.

Belongs to the G-protein coupled receptor 1 family.

It localises to the cell membrane. In terms of biological role, odorant receptor. This chain is Olfactory receptor 52L1 (OR52L1), found in Homo sapiens (Human).